The sequence spans 249 residues: MATDPIHQFQISKLIPIEIGGLDFSFTNSSLFMVATVAAAGAFLYLTTSSRGLVPSRMQSVSEMSYEFVASMLRDAAGSHGMRFFPFVFSLFMFVLVANLLGLFPYFFTVTSHIVVTFALALLVIGTVLVYGFWKHGFGFLKLFVPEGVPGVLLPLVVLIEVISFLSRPISLSVRLFANMLAGHITLKVFAGFVTSLGALGVAGAAGAVLPLAMTVALTGLELLVAFLQAYVFAVLTCMYLNDALHPGH.

6 helical membrane passes run 26 to 46 (FTNS…FLYL), 84 to 104 (FFPF…LGLF), 114 to 134 (IVVT…YGFW), 143 to 163 (LFVP…IEVI), 185 to 205 (ITLK…VAGA), and 208 to 228 (AVLP…VAFL).

Belongs to the ATPase A chain family. F-type ATPases have 2 components, CF(1) - the catalytic core - and CF(0) - the membrane proton channel. CF(1) has five subunits: alpha(3), beta(3), gamma(1), delta(1), epsilon(1). CF(0) has three main subunits: a(1), b(2) and c(9-12). The alpha and beta chains form an alternating ring which encloses part of the gamma chain. CF(1) is attached to CF(0) by a central stalk formed by the gamma and epsilon chains, while a peripheral stalk is formed by the delta and b chains.

The protein resides in the cell inner membrane. Its function is as follows. Key component of the proton channel; it plays a direct role in the translocation of protons across the membrane. This is ATP synthase subunit a from Chelativorans sp. (strain BNC1).